The primary structure comprises 205 residues: MFLRHVIVFSFIALLAGCAGFGARESVEGHGNPAQWAANKQHLTGLDGWQIDGKIGIRAPKDSGSGTLFWLQRQDYYDIRLSGPLGRGAARLTGRPGAVSLEVANQGRYEAPTPEALVEEQLGWKLPVSHLAWWVRGLPAPDSKSRLTLDGNSRLANLDQDGWQVEYLSYAEQNGYWLPERIKLHGSDLDVTLVIKTWQPRKLGQ.

Positions 1-17 (MFLRHVIVFSFIALLAG) are cleaved as a signal peptide. A lipid anchor (N-palmitoyl cysteine) is attached at C18. C18 carries the S-diacylglycerol cysteine lipid modification.

It belongs to the LolB family. Monomer.

Its subcellular location is the cell outer membrane. Its function is as follows. Plays a critical role in the incorporation of lipoproteins in the outer membrane after they are released by the LolA protein. The polypeptide is Outer-membrane lipoprotein LolB (Pseudomonas fluorescens (strain Pf0-1)).